A 229-amino-acid chain; its full sequence is Large ribosomal subunit protein uL1 (229 aa).

The protein belongs to the universal ribosomal protein uL1 family. Part of the 50S ribosomal subunit.

In terms of biological role, binds directly to 23S rRNA. The L1 stalk is quite mobile in the ribosome, and is involved in E site tRNA release. Its function is as follows. Protein L1 is also a translational repressor protein, it controls the translation of the L11 operon by binding to its mRNA. This chain is Large ribosomal subunit protein uL1, found in Clostridium beijerinckii (strain ATCC 51743 / NCIMB 8052) (Clostridium acetobutylicum).